We begin with the raw amino-acid sequence, 151 residues long: Transcriptional regulator MraZ (151 aa).

SpoVT-AbrB domains lie at 5–52 (IHQV…PLSE) and 81–124 (ATDL…SQEE).

This sequence belongs to the MraZ family. In terms of assembly, forms oligomers.

The protein resides in the cytoplasm. It is found in the nucleoid. The chain is Transcriptional regulator MraZ from Marinomonas sp. (strain MWYL1).